Consider the following 675-residue polypeptide: Heat shock 70 kDa protein 12A (675 aa).

Positions 1-45 (MADKEAGGGDAGPRETAPTSTYSSPARSLGDTGITPLSPSHILND) are disordered. At A2 the chain carries N-acetylalanine. Residues 17–26 (APTSTYSSPA) show a composition bias toward polar residues.

It belongs to the heat shock protein 70 family. In terms of assembly, interacts with SORL1 (via cytosolic C-terminus); this interaction affects SORL1 internalization and subcellular localization. In terms of tissue distribution, expressed most strongly in brain, kidney and heart with little or no expression in other tissues. In the brain, expressed in glial cells, including astrocytes (at protein level). In the aorta, preferentially expressed in lesions.

It is found in the cytoplasm. The protein resides in the nucleus. Adapter protein for SORL1, but not SORT1. Delays SORL1 internalization and affects SORL1 subcellular localization. This Mus musculus (Mouse) protein is Heat shock 70 kDa protein 12A (Hspa12a).